A 930-amino-acid polypeptide reads, in one-letter code: MRLEWAPLLLLLLLLSASCLSLAADSPAAAPAQDKTRQPQAAAAAAEPDQPQGEETRERGHLQPLAGQRRSGGLVQNIDQLYSGGGKVGYLVYAGGRRFLLDLERDDTVGAAGSIVTAGGGLSASSGHRGHCFYRGTVDGSPRSLAVFDLCGGLDGFFAVKHARYTLKPLLRGSWAEYERIYGDGSSRILHVYNREGFSFEALPPRASCETPASPSGPQESPSVHSRSRRRSALAPQLLDHSAFSPSGNAGPQTWWRRRRRSISRARQVELLLVADSSMARMYGRGLQHYLLTLASIANRLYSHASIENHIRLAVVKVVVLTDKDTSLEVSKNAATTLKNFCKWQHQHNQLGDDHEEHYDAAILFTREDLCGHHSCDTLGMADVGTICSPERSCAVIEDDGLHAAFTVAHEIGHLLGLSHDDSKFCEENFGTTEDKRLMSSILTSIDASKPWSKCTSATITEFLDDGHGNCLLDLPRKQILGPEELPGQTYDATQQCNLTFGPEYSVCPGMDVCARLWCAVVRQGQMVCLTKKLPAVEGTPCGKGRVCLQGKCVDKTKKKYYSTSSHGNWGSWGPWGQCSRSCGGGVQFAYRHCNNPAPRNSGRYCTGKRAIYRSCSVTPCPPNGKSFRHEQCEAKNGYQSDAKGVKTFVEWVPKYAGVLPADVCKLTCRAKGTGYYVVFSPKVTDGTECRPYSNSVCVRGRCVRTGCDGIIGSKLQYDKCGVCGGDNSSCTKIIGTFNKKSKGYTDVVRIPEGATHIKVRQFKAKDQTRFTAYLALKKKTGEYLINGKYMISTSETIIDINGTVMNYSGWSHRDDFLHGMGYSATKEILIVQILATDPTKALDVRYSFFVPKKTTQKVNSVISHGSNKVGPHSTQLQWVTGPWLACSRTCDTGWHTRTVQCQDGNRKLAKGCLLSQRPSAFKQCLLKKC.

A signal peptide spans 1-21; the sequence is MRLEWAPLLLLLLLLSASCLS. Residues 22 to 261 constitute a propeptide that is removed on maturation; that stretch reads LAADSPAAAP…PQTWWRRRRR (240 aa). A compositionally biased stretch (low complexity) spans 31 to 53; that stretch reads PAQDKTRQPQAAAAAAEPDQPQG. 2 disordered regions span residues 31-68 and 207-231; these read PAQDKTRQPQAAAAAAEPDQPQGEETRERGHLQPLAGQ and ASCETPASPSGPQESPSVHSRSRRR. Residues 207–214 carry the Cysteine switch motif; the sequence is ASCETPAS. Cysteine 209 lines the Zn(2+) pocket. Polar residues predominate over residues 211-225; it reads TPASPSGPQESPSVH. The region spanning 267-476 is the Peptidase M12B domain; that stretch reads RQVELLLVAD…GHGNCLLDLP (210 aa). Intrachain disulfides connect cysteine 342–cysteine 394, cysteine 371–cysteine 376, cysteine 388–cysteine 471, cysteine 426–cysteine 455, cysteine 497–cysteine 519, cysteine 508–cysteine 529, cysteine 514–cysteine 548, and cysteine 542–cysteine 553. Histidine 410 is a binding site for Zn(2+). Residue glutamate 411 is part of the active site. Histidine 414 and histidine 420 together coordinate Zn(2+). The Disintegrin domain maps to 485 to 566; it reads ELPGQTYDAT…TKKKYYSTSS (82 aa). The N-linked (GlcNAc...) asparagine glycan is linked to asparagine 498. In terms of domain architecture, TSP type-1 1 spans 567-622; that stretch reads HGNWGSWGPWGQCSRSCGGGVQFAYRHCNNPAPRNSGRYCTGKRAIYRSCSVTPCP. C-linked (Man) tryptophan glycans are attached at residues tryptophan 570 and tryptophan 573. 3 cysteine pairs are disulfide-bonded: cysteine 579–cysteine 616, cysteine 583–cysteine 621, and cysteine 594–cysteine 606. Serine 582 carries O-linked (Fuc...) serine glycosylation. N-linked (GlcNAc...) asparagine glycosylation is found at asparagine 728, asparagine 802, and asparagine 807. Residues 732–874 are spacer; the sequence is TKIIGTFNKK…HGSNKVGPHS (143 aa). Residues 875–929 form the TSP type-1 2 domain; sequence TQLQWVTGPWLACSRTCDTGWHTRTVQCQDGNRKLAKGCLLSQRPSAFKQCLLKK.

The cofactor is Zn(2+). Post-translationally, the precursor is cleaved by furin and PCSK7 outside of the cell. Glycosylated. Can be O-fucosylated by POFUT2 on a serine or a threonine residue found within the consensus sequence C1-X(2)-(S/T)-C2-G of the TSP type-1 repeat domains where C1 and C2 are the first and second cysteine residue of the repeat, respectively. Fucosylated repeats can then be further glycosylated by the addition of a beta-1,3-glucose residue by the glucosyltransferase, B3GALTL. Fucosylation mediates the efficient secretion of ADAMTS family members. Can also be C-glycosylated with one or two mannose molecules on tryptophan residues within the consensus sequence W-X-X-W of the TPRs, and N-glycosylated. These other glycosylations can also facilitate secretion. As to expression, expressed in skeletal muscle.

Its subcellular location is the secreted. It is found in the extracellular space. The protein localises to the extracellular matrix. Its function is as follows. Metalloproteinase that plays an important role in connective tissue organization, development, inflammation and cell migration. Extracellular matrix (ECM) degrading enzyme that shows proteolytic activity toward the hyalectan group of chondroitin sulfate proteoglycans (CSPGs) including ACAN, VCAN, BCAN and NCAN. Cleavage within the hyalectans occurs at Glu-Xaa recognition motifs. Plays a role in embryonic development, including limb and cardiac morphogenesis, and skeletal muscle development through its VCAN remodeling properties. Cleaves VCAN in the pericellular matrix surrounding myoblasts, facilitating myoblast contact and fusion which is required for skeletal muscle development and regeneration. Participates in the development of brown adipose tissue and browning of white adipose tissue. Plays an important role for T-lymphocyte migration from draining lymph nodes following viral infection. This Mus musculus (Mouse) protein is A disintegrin and metalloproteinase with thrombospondin motifs 5 (Adamts5).